The following is a 71-amino-acid chain: Omega-conotoxin-like CnVIIE (71 aa).

Residues 1-22 (MKLTCVVIVAVLLLTACQLITA) form the signal peptide. Residues 23–45 (DDSRGTQKHRALRSDTKLSMSTR) constitute a propeptide that is removed on maturation. 3 disulfides stabilise this stretch: C46/C61, C53/C65, and C60/C70. The residue at position 52 (P52) is a 4-hydroxyproline; partial. C70 carries the cysteine amide modification.

Belongs to the conotoxin M superfamily. In terms of tissue distribution, expressed by the venom duct.

The protein localises to the secreted. Omega-conotoxins act at presynaptic membranes, they bind and block voltage-gated calcium channels (Cav). This chain is Omega-conotoxin-like CnVIIE, found in Conus consors (Singed cone).